Here is a 481-residue protein sequence, read N- to C-terminus: ATP synthase subunit beta (481 aa).

ATP is bound at residue 167 to 174 (GGAGVGKT).

Belongs to the ATPase alpha/beta chains family. F-type ATPases have 2 components, CF(1) - the catalytic core - and CF(0) - the membrane proton channel. CF(1) has five subunits: alpha(3), beta(3), gamma(1), delta(1), epsilon(1). CF(0) has three main subunits: a(1), b(2) and c(9-12). The alpha and beta chains form an alternating ring which encloses part of the gamma chain. CF(1) is attached to CF(0) by a central stalk formed by the gamma and epsilon chains, while a peripheral stalk is formed by the delta and b chains.

It localises to the cell membrane. The catalysed reaction is ATP + H2O + 4 H(+)(in) = ADP + phosphate + 5 H(+)(out). Its function is as follows. Produces ATP from ADP in the presence of a proton gradient across the membrane. The catalytic sites are hosted primarily by the beta subunits. The chain is ATP synthase subunit beta from Corynebacterium efficiens (strain DSM 44549 / YS-314 / AJ 12310 / JCM 11189 / NBRC 100395).